The chain runs to 23 residues: Retinol-binding protein 3 (23 aa).

It is found in the secreted. The protein resides in the extracellular space. It localises to the extracellular matrix. The protein localises to the interphotoreceptor matrix. IRBP shuttles 11-cis and all trans retinoids between the retinol isomerase in the pigment epithelium and the visual pigments in the photoreceptor cells of the retina. The sequence is that of Retinol-binding protein 3 (RBP3) from Oryctolagus cuniculus (Rabbit).